We begin with the raw amino-acid sequence, 319 residues long: Malate dehydrogenase (319 aa).

NAD(+)-binding positions include Gly-10–Gly-15 and Asp-34. Residues Arg-83 and Arg-89 each contribute to the substrate site. NAD(+)-binding positions include Asn-96 and Ile-119–Asn-121. Substrate contacts are provided by Asn-121 and Arg-152. The Proton acceptor role is filled by His-176.

The protein belongs to the LDH/MDH superfamily. MDH type 3 family.

The catalysed reaction is (S)-malate + NAD(+) = oxaloacetate + NADH + H(+). Catalyzes the reversible oxidation of malate to oxaloacetate. In Francisella tularensis subsp. holarctica (strain FTNF002-00 / FTA), this protein is Malate dehydrogenase.